The sequence spans 334 residues: Pre-mRNA leakage protein 39 (334 aa).

In terms of assembly, interacts with MLP1 and MLP2.

The protein localises to the nucleus membrane. Its function is as follows. Involved in the nuclear retention of improperly spliced pre-mRNAs. The sequence is that of Pre-mRNA leakage protein 39 (PML39) from Saccharomyces cerevisiae (strain ATCC 204508 / S288c) (Baker's yeast).